A 1755-amino-acid polypeptide reads, in one-letter code: Transposon Ty1-JR2 Gag-Pol polyprotein (1755 aa).

Residues 1-16 (MESQQLSQHSHISHGS) show a composition bias toward low complexity. 3 disordered regions span residues 1–93 (MESQ…MMTQ), 126–173 (PQSQ…RPPP), and 352–421 (GSRN…SKST). Polar residues-rich tracts occupy residues 48–60 (TKANSQQTTTPAS), 71–93 (SPQTAQSHSPQNGPYPQQCMMTQ), and 127–152 (QSQFPQYPSSVGTPLSTPSPESGNTF). The span at 153 to 165 (TDSSSADSDMTST) shows a compositional bias: low complexity. The segment at 299-401 (NNGIHINNKV…NSKSKTARAH (103 aa)) is RNA-binding. Low complexity predominate over residues 402 to 418 (NVSTSNNSPSTDNDSIS). A Phosphoserine modification is found at Ser416. Catalysis depends on Asp461, which acts as the For protease activity; shared with dimeric partner. The integrase-type zinc finger-like stretch occupies residues 583–640 (NVHTSESTRKYPYPFIHRMLAHANAQTIRYSLKNNTITYFNESDVDWSSAIDYQCPDC). Positions 660–835 (NSYEPFQYLH…AGLDISTLLP (176 aa)) constitute an Integrase catalytic domain. Positions 671 and 736 each coordinate Mg(2+). 3 disordered regions span residues 956–1087 (SKAV…ETEK), 1092–1111 (RSPSIDASPPENNSSHNIVP), and 1130–1186 (DLPL…EDNE). The span at 960–969 (SPTDSTPPST) shows a compositional bias: low complexity. Positions 1005 to 1015 (STPQISNIEST) are enriched in polar residues. The span at 1038 to 1053 (ESSHASKSKDFRHSDS) shows a compositional bias: basic and acidic residues. Composition is skewed to polar residues over residues 1054-1082 (YSENETNHTNVPISSTGGTNNKTVPQISD) and 1101-1111 (PENNSSHNIVP). Positions 1178-1212 (KKRSLEDNETEIKVSRDTWNTKNMRSLEPPRSKKR) match the Bipartite nuclear localization signal motif. A Reverse transcriptase Ty1/copia-type domain is found at 1338–1476 (NNYYITQLDI…DILGLEIKYQ (139 aa)). The Mg(2+) site is built by Asp1346, Asp1427, Asp1428, Asp1610, Glu1652, and Asp1685. One can recognise an RNase H Ty1/copia-type domain in the interval 1610-1752 (DASYGNQPYY…IKTFKLLTNK (143 aa)).

The capsid protein forms a homotrimer, from which the VLPs are assembled. The protease is a homodimer, whose active site consists of two apposed aspartic acid residues. Initially, virus-like particles (VLPs) are composed of the structural unprocessed proteins Gag and Gag-Pol, and also contain the host initiator methionine tRNA (tRNA(i)-Met) which serves as a primer for minus-strand DNA synthesis, and a dimer of genomic Ty RNA. Processing of the polyproteins occurs within the particle and proceeds by an ordered pathway, called maturation. First, the protease (PR) is released by autocatalytic cleavage of the Gag-Pol polyprotein yielding capsid protein p45 and a Pol-p154 precursor protein. This cleavage is a prerequisite for subsequent processing of Pol-p154 at the remaining sites to release the mature structural and catalytic proteins. Maturation takes place prior to the RT reaction and is required to produce transposition-competent VLPs.

It localises to the cytoplasm. Its subcellular location is the nucleus. It carries out the reaction DNA(n) + a 2'-deoxyribonucleoside 5'-triphosphate = DNA(n+1) + diphosphate. It catalyses the reaction Endonucleolytic cleavage to 5'-phosphomonoester.. Its function is as follows. Capsid protein (CA) is the structural component of the virus-like particle (VLP), forming the shell that encapsulates the retrotransposons dimeric RNA genome. The particles are assembled from trimer-clustered units and there are holes in the capsid shells that allow for the diffusion of macromolecules. CA also has nucleocapsid-like chaperone activity, promoting primer tRNA(i)-Met annealing to the multipartite primer-binding site (PBS), dimerization of Ty1 RNA and initiation of reverse transcription. Functionally, the aspartyl protease (PR) mediates the proteolytic cleavages of the Gag and Gag-Pol polyproteins after assembly of the VLP. Reverse transcriptase/ribonuclease H (RT) is a multifunctional enzyme that catalyzes the conversion of the retro-elements RNA genome into dsDNA within the VLP. The enzyme displays a DNA polymerase activity that can copy either DNA or RNA templates, and a ribonuclease H (RNase H) activity that cleaves the RNA strand of RNA-DNA heteroduplexes during plus-strand synthesis and hydrolyzes RNA primers. The conversion leads to a linear dsDNA copy of the retrotransposon that includes long terminal repeats (LTRs) at both ends. In terms of biological role, integrase (IN) targets the VLP to the nucleus, where a subparticle preintegration complex (PIC) containing at least integrase and the newly synthesized dsDNA copy of the retrotransposon must transit the nuclear membrane. Once in the nucleus, integrase performs the integration of the dsDNA into the host genome. This chain is Transposon Ty1-JR2 Gag-Pol polyprotein (TY1B-JR2), found in Saccharomyces cerevisiae (strain ATCC 204508 / S288c) (Baker's yeast).